The chain runs to 294 residues: Phosphoribosylaminoimidazole-succinocarboxamide synthase (294 aa).

This sequence belongs to the SAICAR synthetase family.

The catalysed reaction is 5-amino-1-(5-phospho-D-ribosyl)imidazole-4-carboxylate + L-aspartate + ATP = (2S)-2-[5-amino-1-(5-phospho-beta-D-ribosyl)imidazole-4-carboxamido]succinate + ADP + phosphate + 2 H(+). It functions in the pathway purine metabolism; IMP biosynthesis via de novo pathway; 5-amino-1-(5-phospho-D-ribosyl)imidazole-4-carboxamide from 5-amino-1-(5-phospho-D-ribosyl)imidazole-4-carboxylate: step 1/2. The sequence is that of Phosphoribosylaminoimidazole-succinocarboxamide synthase from Thermoplasma volcanium (strain ATCC 51530 / DSM 4299 / JCM 9571 / NBRC 15438 / GSS1).